The following is a 114-amino-acid chain: T cell receptor alpha variable 3 (114 aa).

A signal peptide spans 1-20; it reads MASAPISMLAMLFTLSGLRA. The region spanning 21–114 is the Ig-like domain; it reads QSVAQPEDQV…SALYFCAVRD (94 aa). An intrachain disulfide couples Cys-42 to Cys-110. Asn-87 is a glycosylation site (N-linked (GlcNAc...) asparagine).

In terms of assembly, alpha-beta TR is a heterodimer composed of an alpha and beta chain; disulfide-linked. The alpha-beta TR is associated with the transmembrane signaling CD3 coreceptor proteins to form the TR-CD3 (TcR or TCR). The assembly of alpha-beta TR heterodimers with CD3 occurs in the endoplasmic reticulum where a single alpha-beta TR heterodimer associates with one CD3D-CD3E heterodimer, one CD3G-CD3E heterodimer and one CD247 homodimer forming a stable octameric structure. CD3D-CD3E and CD3G-CD3E heterodimers preferentially associate with TR alpha and TR beta chains, respectively. The association of the CD247 homodimer is the last step of TcR assembly in the endoplasmic reticulum and is required for transport to the cell surface.

The protein localises to the cell membrane. V region of the variable domain of T cell receptor (TR) alpha chain that participates in the antigen recognition. Alpha-beta T cell receptors are antigen specific receptors which are essential to the immune response and are present on the cell surface of T lymphocytes. Recognize peptide-major histocompatibility (MH) (pMH) complexes that are displayed by antigen presenting cells (APC), a prerequisite for efficient T cell adaptive immunity against pathogens. Binding of alpha-beta TR to pMH complex initiates TR-CD3 clustering on the cell surface and intracellular activation of LCK that phosphorylates the ITAM motifs of CD3G, CD3D, CD3E and CD247 enabling the recruitment of ZAP70. In turn ZAP70 phosphorylates LAT, which recruits numerous signaling molecules to form the LAT signalosome. The LAT signalosome propagates signal branching to three major signaling pathways, the calcium, the mitogen-activated protein kinase (MAPK) kinase and the nuclear factor NF-kappa-B (NF-kB) pathways, leading to the mobilization of transcription factors that are critical for gene expression and essential for T cell growth and differentiation. The T cell repertoire is generated in the thymus, by V-(D)-J rearrangement. This repertoire is then shaped by intrathymic selection events to generate a peripheral T cell pool of self-MH restricted, non-autoaggressive T cells. Post-thymic interaction of alpha-beta TR with the pMH complexes shapes TR structural and functional avidity. This chain is T cell receptor alpha variable 3, found in Homo sapiens (Human).